The chain runs to 90 residues: Probable Fe(2+)-trafficking protein (90 aa).

The protein belongs to the Fe(2+)-trafficking protein family.

Its function is as follows. Could be a mediator in iron transactions between iron acquisition and iron-requiring processes, such as synthesis and/or repair of Fe-S clusters in biosynthetic enzymes. The sequence is that of Probable Fe(2+)-trafficking protein from Chromobacterium violaceum (strain ATCC 12472 / DSM 30191 / JCM 1249 / CCUG 213 / NBRC 12614 / NCIMB 9131 / NCTC 9757 / MK).